Consider the following 269-residue polypeptide: Small ribosomal subunit protein uS3 (269 aa).

In terms of domain architecture, KH type-2 spans 38–106; the sequence is IREWLHKNLE…QIQLNILEVK (69 aa). A disordered region spans residues 215–269; that stretch reads AQKAARQAAQGGRGGRGGNRRGRGDRPDRRGGRRRAEAAKQSAETPAPQTENAGA. Positions 236–252 are enriched in basic and acidic residues; the sequence is GRGDRPDRRGGRRRAEA. The span at 256-269 shows a compositional bias: polar residues; sequence SAETPAPQTENAGA.

This sequence belongs to the universal ribosomal protein uS3 family. Part of the 30S ribosomal subunit. Forms a tight complex with proteins S10 and S14.

Binds the lower part of the 30S subunit head. Binds mRNA in the 70S ribosome, positioning it for translation. The protein is Small ribosomal subunit protein uS3 of Cutibacterium acnes (strain DSM 16379 / KPA171202) (Propionibacterium acnes).